The sequence spans 133 residues: Basic leucine zipper transcriptional factor ATF-like 3 (133 aa).

The disordered stretch occupies residues 1-68 (MSQGPPAGGV…EHESLEQENS (68 aa)). Phosphoserine occurs at positions 2 and 24. Positions 11–24 (LQSSVAAPGNQPQS) are enriched in polar residues. The bZIP domain occupies 28–91 (DDRKVRRREK…RHLTEALKEH (64 aa)). Residues 30–55 (RKVRRREKNRVAAQRSRKKQTQKSDK) are basic motif. Residues 51–68 (QKSDKLHEEHESLEQENS) show a composition bias toward basic and acidic residues. Residues 56–84 (LHEEHESLEQENSVLRREIAKLKEELRHL) are leucine-zipper.

Belongs to the bZIP family. In terms of assembly, heterodimer; heterodimerizes with JUN family proteins. Interacts with JUN. Ubiquitously expressed.

It localises to the nucleus. AP-1 family transcription factor that controls the differentiation of CD8(+) thymic conventional dendritic cells in the immune system. Acts via the formation of a heterodimer with JUN family proteins that recognizes and binds DNA sequence 5'-TGA[CG]TCA-3' and regulates expression of target genes. Required for development of CD8-alpha(+) classical dendritic cells (cDCs) and related CD103(+) dendritic cells that cross-present antigens to CD8 T-cells and produce interleukin-12 (IL12) in response to pathogens. This chain is Basic leucine zipper transcriptional factor ATF-like 3 (Batf3), found in Rattus norvegicus (Rat).